The sequence spans 436 residues: Chaperone SurA (436 aa).

Residues 1–30 form the signal peptide; it reads MKFFQRPERRLKQWGLALLLAASALLPARA. 2 consecutive PpiC domains span residues 180 to 281 and 291 to 389; these read ETEY…KLVD and VTQT…QVLE.

It localises to the periplasm. It catalyses the reaction [protein]-peptidylproline (omega=180) = [protein]-peptidylproline (omega=0). Functionally, chaperone involved in the correct folding and assembly of outer membrane proteins. Recognizes specific patterns of aromatic residues and the orientation of their side chains, which are found more frequently in integral outer membrane proteins. May act in both early periplasmic and late outer membrane-associated steps of protein maturation. The chain is Chaperone SurA from Thiobacillus denitrificans (strain ATCC 25259 / T1).